A 39-amino-acid polypeptide reads, in one-letter code: Omega-theraphotoxin-Asp1g (39 aa).

Disulfide bonds link Cys4/Cys25, Cys8/Cys31, and Cys17/Cys36.

Belongs to the neurotoxin 12 (Hwtx-2) family. 06 (TXP1) subfamily. In terms of tissue distribution, expressed by the venom gland.

It is found in the secreted. In terms of biological role, inhibits voltage-gated calcium channels (Cav) in rat cerebellar granule cells. Has insecticidal activity. This chain is Omega-theraphotoxin-Asp1g, found in Aphonopelma sp. (American tarantula).